Consider the following 400-residue polypeptide: Acetate kinase (400 aa).

N8 lines the Mg(2+) pocket. K15 lines the ATP pocket. Residue R89 coordinates substrate. The active-site Proton donor/acceptor is D146. Residues 206–210, 283–285, and 331–335 each bind ATP; these read HVGNG, DMR, and GMGEN. Mg(2+) is bound at residue E383.

It belongs to the acetokinase family. Homodimer. The cofactor is Mg(2+). Requires Mn(2+) as cofactor.

Its subcellular location is the cytoplasm. The enzyme catalyses acetate + ATP = acetyl phosphate + ADP. The protein operates within metabolic intermediate biosynthesis; acetyl-CoA biosynthesis; acetyl-CoA from acetate: step 1/2. Functionally, catalyzes the formation of acetyl phosphate from acetate and ATP. Can also catalyze the reverse reaction. The chain is Acetate kinase from Streptococcus equi subsp. zooepidemicus (strain MGCS10565).